Reading from the N-terminus, the 430-residue chain is MFDSLDLVIDTIVAREVLDSRGNPTVEAEVLLEGGASGRAIVPSGASTGAHEAHELRDGGDRYMGKGVIQAVNHIEERIAPALCGLSALDQAAVDAAMLELDGSDNKSSLGANAILAVSMANARAAANGLGLPLYRYLGGPMATLLPVPLMNVINGGAHAANSLDFQEFMLVPHGAPSFREALRMGTEVFHTLKKLLSAKGMSTAVGDEGGFAPDLGNVEAGEILVEAIEKAGYKPGEQISLALDVASTEFFADGRYAFDGGSYDSAEMVGQLEKLVEQFPIVSIEDGLAEDDWEGWKLLTERLGSKVQLVGDDLFVTNTKRLQQGIDSSTANSILIKVNQIGSLTETLQAIDLAGRSGYTSVISHRSGETEDTTIADLSVATRAGQIKTGSLSRSERVAKYNQLLRIEDELGSQAVYAGAVGQGPRGNA.

Gln167 is a (2R)-2-phosphoglycerate binding site. Residue Glu209 is the Proton donor of the active site. The Mg(2+) site is built by Asp245, Glu286, and Asp313. (2R)-2-phosphoglycerate contacts are provided by Lys338, Arg367, Ser368, and Lys389. Lys338 serves as the catalytic Proton acceptor.

Belongs to the enolase family. The cofactor is Mg(2+).

The protein resides in the cytoplasm. It is found in the secreted. It localises to the cell surface. It catalyses the reaction (2R)-2-phosphoglycerate = phosphoenolpyruvate + H2O. The protein operates within carbohydrate degradation; glycolysis; pyruvate from D-glyceraldehyde 3-phosphate: step 4/5. Its function is as follows. Catalyzes the reversible conversion of 2-phosphoglycerate (2-PG) into phosphoenolpyruvate (PEP). It is essential for the degradation of carbohydrates via glycolysis. The sequence is that of Enolase from Synechococcus sp. (strain WH7803).